The sequence spans 574 residues: Tyrosinase (574 aa).

The Cu cation site is built by histidine 67, histidine 95, histidine 104, histidine 275, histidine 279, and histidine 304. The segment at residues 93-95 (CTH) is a cross-link (2'-(S-cysteinyl)-histidine (Cys-His)).

It belongs to the tyrosinase family. Requires Cu(2+) as cofactor.

It carries out the reaction 2 L-dopa + O2 = 2 L-dopaquinone + 2 H2O. It catalyses the reaction L-tyrosine + O2 = L-dopaquinone + H2O. This is a copper-containing oxidase that functions in the formation of pigments such as melanins and other polyphenolic compounds. The protein is Tyrosinase (TYR) of Podospora anserina (Pleurage anserina).